The sequence spans 144 residues: MRQKIFLFVRSLIILYLILFIGEGIAKLIPIGIPGSIFGLLILFIGLTTQIIKVDWVFFGASLLIRYMAVLFVPVSVGVMKYSDLLVSHASSLLIPNIVSTCVTLLVIGFLGDYLFSLNSFTRLRKKAIKKRDINNVNNKGEAS.

4 helical membrane-spanning segments follow: residues 5–25 (IFLF…GEGI), 28–48 (LIPI…IGLT), 57–77 (VFFG…PVSV), and 92–112 (SLLI…GFLG).

It belongs to the UPF0299 family.

It localises to the cell inner membrane. The polypeptide is UPF0299 membrane protein MS1271 (Mannheimia succiniciproducens (strain KCTC 0769BP / MBEL55E)).